The following is a 151-amino-acid chain: uncharacterized protein (151 aa).

This is an uncharacterized protein from Mycoplasma genitalium (strain ATCC 33530 / DSM 19775 / NCTC 10195 / G37) (Mycoplasmoides genitalium).